The sequence spans 124 residues: UPF0102 protein Meso_4010 (124 aa).

The protein belongs to the UPF0102 family.

The polypeptide is UPF0102 protein Meso_4010 (Chelativorans sp. (strain BNC1)).